The primary structure comprises 273 residues: 4-hydroxy-tetrahydrodipicolinate reductase (273 aa).

NAD(+)-binding positions include 12–17 (GAGGRM) and E38. R39 contributes to the NADP(+) binding site. NAD(+) is bound by residues 102 to 104 (GTT) and 126 to 129 (AANF). Catalysis depends on H159, which acts as the Proton donor/acceptor. Residue H160 coordinates (S)-2,3,4,5-tetrahydrodipicolinate. The Proton donor role is filled by K163. 169–170 (GT) serves as a coordination point for (S)-2,3,4,5-tetrahydrodipicolinate.

The protein belongs to the DapB family. Homotetramer.

It is found in the cytoplasm. It carries out the reaction (S)-2,3,4,5-tetrahydrodipicolinate + NAD(+) + H2O = (2S,4S)-4-hydroxy-2,3,4,5-tetrahydrodipicolinate + NADH + H(+). The enzyme catalyses (S)-2,3,4,5-tetrahydrodipicolinate + NADP(+) + H2O = (2S,4S)-4-hydroxy-2,3,4,5-tetrahydrodipicolinate + NADPH + H(+). It functions in the pathway amino-acid biosynthesis; L-lysine biosynthesis via DAP pathway; (S)-tetrahydrodipicolinate from L-aspartate: step 4/4. Its function is as follows. Catalyzes the conversion of 4-hydroxy-tetrahydrodipicolinate (HTPA) to tetrahydrodipicolinate. The protein is 4-hydroxy-tetrahydrodipicolinate reductase of Klebsiella pneumoniae (strain 342).